A 327-amino-acid chain; its full sequence is Phenylalanine--tRNA ligase alpha subunit (327 aa).

Residue glutamate 252 participates in Mg(2+) binding.

This sequence belongs to the class-II aminoacyl-tRNA synthetase family. Phe-tRNA synthetase alpha subunit type 1 subfamily. As to quaternary structure, tetramer of two alpha and two beta subunits. It depends on Mg(2+) as a cofactor.

The protein localises to the cytoplasm. The enzyme catalyses tRNA(Phe) + L-phenylalanine + ATP = L-phenylalanyl-tRNA(Phe) + AMP + diphosphate + H(+). The protein is Phenylalanine--tRNA ligase alpha subunit of Edwardsiella ictaluri (strain 93-146).